A 120-amino-acid polypeptide reads, in one-letter code: Ribonuclease P protein component 4 (120 aa).

Positions 67, 70, 96, and 99 each coordinate Zn(2+).

This sequence belongs to the eukaryotic/archaeal RNase P protein component 4 family. Consists of a catalytic RNA component and at least 4-5 protein subunits. Requires Zn(2+) as cofactor.

It is found in the cytoplasm. It catalyses the reaction Endonucleolytic cleavage of RNA, removing 5'-extranucleotides from tRNA precursor.. Its function is as follows. Part of ribonuclease P, a protein complex that generates mature tRNA molecules by cleaving their 5'-ends. This Thermococcus sibiricus (strain DSM 12597 / MM 739) protein is Ribonuclease P protein component 4.